A 197-amino-acid polypeptide reads, in one-letter code: Peptide deformylase (197 aa).

Positions 106 and 148 each coordinate Fe cation. The active site involves E149. H152 lines the Fe cation pocket.

The protein belongs to the polypeptide deformylase family. It depends on Fe(2+) as a cofactor.

The enzyme catalyses N-terminal N-formyl-L-methionyl-[peptide] + H2O = N-terminal L-methionyl-[peptide] + formate. Its function is as follows. Removes the formyl group from the N-terminal Met of newly synthesized proteins. Requires at least a dipeptide for an efficient rate of reaction. N-terminal L-methionine is a prerequisite for activity but the enzyme has broad specificity at other positions. This is Peptide deformylase from Mycobacterium sp. (strain JLS).